The sequence spans 327 residues: Chain length determinant protein (327 aa).

At 1–31 (MTVDSNTSSGRGNDPEQIDLIELLLQLWRGK) the chain is on the cytoplasmic side. The helical transmembrane segment at 32-52 (MTIIVAVIIAILLAVGYLMIA) threads the bilayer. Residues 53–294 (KEKWTSTAII…LPVRRDSPKT (242 aa)) are Periplasmic-facing. A helical membrane pass occupies residues 295–315 (AITLVLAVLLGGMIGAGIVLG). Residues 316 to 327 (RNALRSYKPKAL) lie on the Cytoplasmic side of the membrane.

Belongs to the WzzB/Cld/Rol family.

It localises to the cell inner membrane. It functions in the pathway bacterial outer membrane biogenesis; lipopolysaccharide biosynthesis. Confers a modal distribution of chain length on the O-antigen component of lipopolysaccharide (LPS). Gives rise to a reduced number of short chain molecules and increases in numbers of longer molecules, with a modal value of 20. The sequence is that of Chain length determinant protein (wzzB) from Salmonella typhimurium (strain LT2 / SGSC1412 / ATCC 700720).